Here is a 238-residue protein sequence, read N- to C-terminus: 1-(5-phosphoribosyl)-5-[(5-phosphoribosylamino)methylideneamino] imidazole-4-carboxamide isomerase (238 aa).

Residue Asp-8 is the Proton acceptor of the active site. The active-site Proton donor is Asp-130.

It belongs to the HisA/HisF family.

It localises to the cytoplasm. The catalysed reaction is 1-(5-phospho-beta-D-ribosyl)-5-[(5-phospho-beta-D-ribosylamino)methylideneamino]imidazole-4-carboxamide = 5-[(5-phospho-1-deoxy-D-ribulos-1-ylimino)methylamino]-1-(5-phospho-beta-D-ribosyl)imidazole-4-carboxamide. Its pathway is amino-acid biosynthesis; L-histidine biosynthesis; L-histidine from 5-phospho-alpha-D-ribose 1-diphosphate: step 4/9. In Methanococcus maripaludis (strain C6 / ATCC BAA-1332), this protein is 1-(5-phosphoribosyl)-5-[(5-phosphoribosylamino)methylideneamino] imidazole-4-carboxamide isomerase.